The following is a 1050-amino-acid chain: DNA ligase 4 (1050 aa).

Residues 1–22 (MNTNRRSRSPDEEALEEDQHQY) form a disordered region. E329, K331, L332, R336, E398, F438, E498, K503, K520, and K522 together coordinate ATP. The active-site N6-AMP-lysine intermediate is the K331. E398 is a binding site for Mg(2+). E498 lines the Mg(2+) pocket. Residues 691–702 (QEQERKKMEMEN) are compositionally biased toward basic and acidic residues. The tract at residues 691–711 (QEQERKKMEMENRKRKPATKR) is disordered. BRCT domains lie at 742 to 840 (ASKR…KENK) and 936 to 1049 (LRSF…EYVA).

Belongs to the ATP-dependent DNA ligase family. Mg(2+) serves as cofactor.

The protein resides in the nucleus. It carries out the reaction ATP + (deoxyribonucleotide)n-3'-hydroxyl + 5'-phospho-(deoxyribonucleotide)m = (deoxyribonucleotide)n+m + AMP + diphosphate.. DNA ligase involved in DNA non-homologous end joining (NHEJ); required for double-strand break (DSB) repair. In Neurospora crassa (strain ATCC 24698 / 74-OR23-1A / CBS 708.71 / DSM 1257 / FGSC 987), this protein is DNA ligase 4 (mus-53).